The primary structure comprises 257 residues: Zinc transporter ZupT (257 aa).

The next 8 membrane-spanning stretches (helical) occupy residues 5–25 (LILT…GVLG), 32–52 (VLAF…LMEM), 61–81 (GMSP…YFGL), 109–129 (AILL…ATFV), 137–157 (LGFG…LAVA), 171–191 (IFWA…AWLI), 195–215 (LVSP…MVAL), and 236–256 (GVLC…TIGI). Fe(2+) contacts are provided by asparagine 120 and glutamate 123. Zn(2+)-binding residues include glutamate 123 and histidine 148. The Fe(2+) site is built by asparagine 149, glutamate 152, and glutamate 181. Residue glutamate 152 participates in Zn(2+) binding.

It belongs to the ZIP transporter (TC 2.A.5) family. ZupT subfamily.

The protein localises to the cell inner membrane. The catalysed reaction is Zn(2+)(in) = Zn(2+)(out). In terms of biological role, mediates zinc uptake. May also transport other divalent cations. In Salmonella heidelberg (strain SL476), this protein is Zinc transporter ZupT.